The following is a 205-amino-acid chain: Small ribosomal subunit protein uS4 (205 aa).

The disordered stretch occupies residues 17 to 46 (ENIWGRPKSPVNKREYGPGQHGQRRKGKLS). Residues 94–157 (SRLDAVVYRA…KQLVIVLESV (64 aa)) enclose the S4 RNA-binding domain.

It belongs to the universal ribosomal protein uS4 family. As to quaternary structure, part of the 30S ribosomal subunit. Contacts protein S5. The interaction surface between S4 and S5 is involved in control of translational fidelity.

Its function is as follows. One of the primary rRNA binding proteins, it binds directly to 16S rRNA where it nucleates assembly of the body of the 30S subunit. With S5 and S12 plays an important role in translational accuracy. This Mesorhizobium japonicum (strain LMG 29417 / CECT 9101 / MAFF 303099) (Mesorhizobium loti (strain MAFF 303099)) protein is Small ribosomal subunit protein uS4.